Reading from the N-terminus, the 646-residue chain is Zinc finger protein 493 (646 aa).

The C2H2-type 1; degenerate zinc finger occupies Phe-26 to His-48. C2H2-type zinc fingers lie at residues Phe-54–His-76 and Tyr-82–His-104. A C2H2-type 4; degenerate zinc finger spans residues Ser-109–His-131. The segment at Tyr-137 to His-159 adopts a C2H2-type 5 zinc-finger fold. A C2H2-type 6; degenerate zinc finger spans residues Tyr-165–His-187. A C2H2-type 7; degenerate zinc finger spans residues Tyr-193–His-215. The segment at His-221–His-243 adopts a C2H2-type 8; degenerate zinc-finger fold. 14 consecutive C2H2-type zinc fingers follow at residues Tyr-249–His-271, His-277–His-299, Tyr-305–His-327, Tyr-333–His-355, Tyr-361–His-383, Tyr-389–His-411, Tyr-417–His-439, Tyr-445–His-467, Tyr-473–His-495, Tyr-501–His-523, Tyr-529–His-551, Tyr-557–His-579, Cys-585–His-607, and Tyr-613–His-635.

Its subcellular location is the nucleus. Functionally, may be involved in transcriptional regulation. The polypeptide is Zinc finger protein 493 (ZNF493) (Homo sapiens (Human)).